Consider the following 695-residue polypeptide: Tail-specific protease (695 aa).

Positions 1 to 29 are cleaved as a signal peptide; sequence MVMKFKMSKNVICYTWLSVCLSSAIPAFA. In terms of domain architecture, PDZ spans 256 to 316; sequence IGTTLQSEDD…RLEDLVEKIK (61 aa). Catalysis depends on charge relay system residues Ser-459, Asp-470, and Lys-484.

It belongs to the peptidase S41A family.

The protein resides in the cell inner membrane. It carries out the reaction The enzyme shows specific recognition of a C-terminal tripeptide, Xaa-Yaa-Zaa, in which Xaa is preferably Ala or Leu, Yaa is preferably Ala or Tyr, and Zaa is preferably Ala, but then cleaves at a variable distance from the C-terminus. A typical cleavage is -Ala-Ala-|-Arg-Ala-Ala-Lys-Glu-Asn-Tyr-Ala-Leu-Ala-Ala.. In terms of biological role, involved in the cleavage of a C-terminal peptide of 11 residues from the precursor form of penicillin-binding protein 3 (PBP3). May be involved in protection of the bacterium from thermal and osmotic stresses. This chain is Tail-specific protease (prc), found in Haemophilus influenzae (strain ATCC 51907 / DSM 11121 / KW20 / Rd).